The primary structure comprises 369 residues: Anthranilate phosphoribosyltransferase (369 aa).

Residues Gly-111, 114-115 (GD), Thr-119, 121-124 (NIST), 139-147 (KHGNRGVSS), and Ser-151 contribute to the 5-phospho-alpha-D-ribose 1-diphosphate site. Position 111 (Gly-111) interacts with anthranilate. Ser-123 contacts Mg(2+). Asn-142 is a binding site for anthranilate. Arg-197 contacts anthranilate. 2 residues coordinate Mg(2+): Asp-256 and Glu-257.

This sequence belongs to the anthranilate phosphoribosyltransferase family. Homodimer. Mg(2+) serves as cofactor.

The enzyme catalyses N-(5-phospho-beta-D-ribosyl)anthranilate + diphosphate = 5-phospho-alpha-D-ribose 1-diphosphate + anthranilate. It participates in amino-acid biosynthesis; L-tryptophan biosynthesis; L-tryptophan from chorismate: step 2/5. In terms of biological role, catalyzes the transfer of the phosphoribosyl group of 5-phosphorylribose-1-pyrophosphate (PRPP) to anthranilate to yield N-(5'-phosphoribosyl)-anthranilate (PRA). In Cupriavidus pinatubonensis (strain JMP 134 / LMG 1197) (Cupriavidus necator (strain JMP 134)), this protein is Anthranilate phosphoribosyltransferase.